A 219-amino-acid polypeptide reads, in one-letter code: Glycerol-3-phosphate acyltransferase 2 (219 aa).

5 consecutive transmembrane segments (helical) span residues 1–21 (MVFW…GSTP), 55–75 (WPAL…VVFA), 93–113 (ALDL…AVLL), 135–155 (VLLA…GVAL), and 160–180 (IVSL…CGLE).

The protein belongs to the PlsY family. Probably interacts with PlsX.

The protein resides in the cell inner membrane. It catalyses the reaction an acyl phosphate + sn-glycerol 3-phosphate = a 1-acyl-sn-glycero-3-phosphate + phosphate. It participates in lipid metabolism; phospholipid metabolism. In terms of biological role, catalyzes the transfer of an acyl group from acyl-phosphate (acyl-PO(4)) to glycerol-3-phosphate (G3P) to form lysophosphatidic acid (LPA). This enzyme utilizes acyl-phosphate as fatty acyl donor, but not acyl-CoA or acyl-ACP. In Rhizobium johnstonii (strain DSM 114642 / LMG 32736 / 3841) (Rhizobium leguminosarum bv. viciae), this protein is Glycerol-3-phosphate acyltransferase 2.